The chain runs to 642 residues: Threonine--tRNA ligase (642 aa).

The TGS domain maps to 1–61 (MPAITLPDGS…AADAQVVFVT (61 aa)). Positions 243 to 536 (DHRRLGKEMD…LIEQYAGRFP (294 aa)) are catalytic. Positions 336, 387, and 513 each coordinate Zn(2+).

It belongs to the class-II aminoacyl-tRNA synthetase family. In terms of assembly, homodimer. Zn(2+) is required as a cofactor.

It localises to the cytoplasm. It catalyses the reaction tRNA(Thr) + L-threonine + ATP = L-threonyl-tRNA(Thr) + AMP + diphosphate + H(+). Catalyzes the attachment of threonine to tRNA(Thr) in a two-step reaction: L-threonine is first activated by ATP to form Thr-AMP and then transferred to the acceptor end of tRNA(Thr). Also edits incorrectly charged L-seryl-tRNA(Thr). This chain is Threonine--tRNA ligase, found in Granulibacter bethesdensis (strain ATCC BAA-1260 / CGDNIH1).